Here is a 202-residue protein sequence, read N- to C-terminus: Small ribosomal subunit protein uS4c (202 aa).

An S4 RNA-binding domain is found at 90 to 158; it reads MRSDNVIFRL…ISKNIELYQK (69 aa).

This sequence belongs to the universal ribosomal protein uS4 family. In terms of assembly, part of the 30S ribosomal subunit. Contacts protein S5. The interaction surface between S4 and S5 is involved in control of translational fidelity.

The protein localises to the plastid. The protein resides in the chloroplast. One of the primary rRNA binding proteins, it binds directly to 16S rRNA where it nucleates assembly of the body of the 30S subunit. Functionally, with S5 and S12 plays an important role in translational accuracy. The chain is Small ribosomal subunit protein uS4c (rps4) from Exsertotheca crispa (Moss).